We begin with the raw amino-acid sequence, 289 residues long: Undecaprenyl-diphosphatase (289 aa).

8 helical membrane-spanning segments follow: residues 23 to 43, 56 to 76, 104 to 124, 135 to 155, 165 to 185, 210 to 230, 235 to 255, and 269 to 289; these read LFLG…TAHL, GVAV…AYFW, SAIV…KLFW, IPAI…AENV, LSFW…IPGV, FLLG…QAFG, VDVF…WIAI, and IFIT…YLAF.

The protein belongs to the UppP family.

The protein resides in the cell inner membrane. It carries out the reaction di-trans,octa-cis-undecaprenyl diphosphate + H2O = di-trans,octa-cis-undecaprenyl phosphate + phosphate + H(+). Functionally, catalyzes the dephosphorylation of undecaprenyl diphosphate (UPP). Confers resistance to bacitracin. The sequence is that of Undecaprenyl-diphosphatase from Prochlorococcus marinus (strain SARG / CCMP1375 / SS120).